A 383-amino-acid polypeptide reads, in one-letter code: S-adenosylmethionine synthase (383 aa).

H15 is an ATP binding site. D17 provides a ligand contact to Mg(2+). E43 is a K(+) binding site. The L-methionine site is built by E56 and Q99. Residues 99 to 109 (QSPDINQGVDR) are flexible loop. ATP contacts are provided by residues 164–166 (DAK), 230–231 (RF), D239, 245–246 (RK), A262, and K266. D239 contributes to the L-methionine binding site. K270 contributes to the L-methionine binding site.

The protein belongs to the AdoMet synthase family. In terms of assembly, homotetramer; dimer of dimers. Mg(2+) is required as a cofactor. Requires K(+) as cofactor.

It is found in the cytoplasm. It carries out the reaction L-methionine + ATP + H2O = S-adenosyl-L-methionine + phosphate + diphosphate. The protein operates within amino-acid biosynthesis; S-adenosyl-L-methionine biosynthesis; S-adenosyl-L-methionine from L-methionine: step 1/1. Functionally, catalyzes the formation of S-adenosylmethionine (AdoMet) from methionine and ATP. The overall synthetic reaction is composed of two sequential steps, AdoMet formation and the subsequent tripolyphosphate hydrolysis which occurs prior to release of AdoMet from the enzyme. The chain is S-adenosylmethionine synthase from Pectobacterium atrosepticum (strain SCRI 1043 / ATCC BAA-672) (Erwinia carotovora subsp. atroseptica).